We begin with the raw amino-acid sequence, 1940 residues long: Myosin-3 (1940 aa).

The 50-residue stretch at 33–82 (DAKTYCFVVDSKEEYAKGKIKSSQDGKVTVETEDNRTLVVKPEDVYAMNP) folds into the Myosin N-terminal SH3-like domain. Residues 86-779 (DRIEDMAMLT…LLGTLEEMRD (694 aa)) form the Myosin motor domain. Residue K130 is modified to N6,N6,N6-trimethyllysine. Position 179-186 (179-186 (GESGAGKT)) interacts with ATP. 2 actin-binding regions span residues 656–678 (LNKL…IPNE) and 758–772 (KFGH…GLLG). Residues 782–811 (LAKLITRTQAVCRGFLMRVEFQKMVQRRES) form the IQ domain. A coiled-coil region spans residues 840–1933 (LLKSAETEKE…KTRDFTSSRM (1094 aa)).

This sequence belongs to the TRAFAC class myosin-kinesin ATPase superfamily. Myosin family. In terms of assembly, muscle myosin is a hexameric protein that consists of 2 heavy chain subunits (MHC), 2 alkali light chain subunits (MLC) and 2 regulatory light chain subunits (MLC-2). As to expression, expressed in fetal bone, thymus, placenta, heart, brain, and liver.

Its subcellular location is the cytoplasm. It localises to the myofibril. In terms of biological role, muscle contraction. This chain is Myosin-3 (MYH3), found in Homo sapiens (Human).